The following is a 716-amino-acid chain: Translation initiation factor IF-2 (716 aa).

A disordered region spans residues 50–136 (YKKGGARAKS…VKPKKELPEK (87 aa)). A compositionally biased stretch (polar residues) spans 62-84 (PAETNKNKQPQGVNQQSAGNQPN). Positions 101–113 (KNKKNNNNKKNKR) are enriched in basic residues. A compositionally biased stretch (low complexity) spans 114-126 (NNNNNKNQHQQKP). In terms of domain architecture, tr-type G spans 217–386 (IRPPVVTIMG…LLVSEVEELK (170 aa)). The segment at 226–233 (GHVDHGKT) is G1. Residue 226–233 (GHVDHGKT) participates in GTP binding. The segment at 251–255 (GITQH) is G2. The tract at residues 272-275 (DTPG) is G3. GTP is bound by residues 272 to 276 (DTPGH) and 326 to 329 (NKID). Positions 326–329 (NKID) are G4. A G5 region spans residues 362–364 (SAL).

Belongs to the TRAFAC class translation factor GTPase superfamily. Classic translation factor GTPase family. IF-2 subfamily.

The protein localises to the cytoplasm. Functionally, one of the essential components for the initiation of protein synthesis. Protects formylmethionyl-tRNA from spontaneous hydrolysis and promotes its binding to the 30S ribosomal subunits. Also involved in the hydrolysis of GTP during the formation of the 70S ribosomal complex. In Bacillus subtilis (strain 168), this protein is Translation initiation factor IF-2 (infB).